The following is a 322-amino-acid chain: Tubulin alpha-4 chain (322 aa).

Residues serine 15, glycine 19, threonine 20, threonine 54, asparagine 81, and asparagine 103 each contribute to the GTP site. Residue glutamate 129 is part of the active site.

Belongs to the tubulin family. Dimer of alpha and beta chains. A typical microtubule is a hollow water-filled tube with an outer diameter of 25 nm and an inner diameter of 15 nM. Alpha-beta heterodimers associate head-to-tail to form protofilaments running lengthwise along the microtubule wall with the beta-tubulin subunit facing the microtubule plus end conferring a structural polarity. Microtubules usually have 13 protofilaments but different protofilament numbers can be found in some organisms and specialized cells. Mg(2+) is required as a cofactor. Post-translationally, some glutamate residues at the C-terminus are polyglycylated, resulting in polyglycine chains on the gamma-carboxyl group. Glycylation is mainly limited to tubulin incorporated into axonemes (cilia and flagella) whereas glutamylation is prevalent in neuronal cells, centrioles, axonemes, and the mitotic spindle. Both modifications can coexist on the same protein on adjacent residues, and lowering polyglycylation levels increases polyglutamylation, and reciprocally. The precise function of polyglycylation is still unclear. Some glutamate residues at the C-terminus are polyglutamylated, resulting in polyglutamate chains on the gamma-carboxyl group. Polyglutamylation plays a key role in microtubule severing by spastin (SPAST). SPAST preferentially recognizes and acts on microtubules decorated with short polyglutamate tails: severing activity by SPAST increases as the number of glutamates per tubulin rises from one to eight, but decreases beyond this glutamylation threshold.

The protein localises to the cytoplasm. Its subcellular location is the cytoskeleton. It carries out the reaction GTP + H2O = GDP + phosphate + H(+). Tubulin is the major constituent of microtubules, a cylinder consisting of laterally associated linear protofilaments composed of alpha- and beta-tubulin heterodimers. Microtubules grow by the addition of GTP-tubulin dimers to the microtubule end, where a stabilizing cap forms. Below the cap, tubulin dimers are in GDP-bound state, owing to GTPase activity of alpha-tubulin. In Gallus gallus (Chicken), this protein is Tubulin alpha-4 chain.